A 420-amino-acid polypeptide reads, in one-letter code: 3-phosphoshikimate 1-carboxyvinyltransferase (420 aa).

3 residues coordinate 3-phosphoshikimate: K20, S21, and R25. K20 provides a ligand contact to phosphoenolpyruvate. R119 contacts phosphoenolpyruvate. 3-phosphoshikimate is bound by residues S161, S162, Q163, S189, D303, Q326, and K330. Q163 is a phosphoenolpyruvate binding site. D303 functions as the Proton acceptor in the catalytic mechanism. Phosphoenolpyruvate is bound by residues R334, R375, and K400.

It belongs to the EPSP synthase family. In terms of assembly, monomer.

It localises to the cytoplasm. It carries out the reaction 3-phosphoshikimate + phosphoenolpyruvate = 5-O-(1-carboxyvinyl)-3-phosphoshikimate + phosphate. It participates in metabolic intermediate biosynthesis; chorismate biosynthesis; chorismate from D-erythrose 4-phosphate and phosphoenolpyruvate: step 6/7. Its function is as follows. Catalyzes the transfer of the enolpyruvyl moiety of phosphoenolpyruvate (PEP) to the 5-hydroxyl of shikimate-3-phosphate (S3P) to produce enolpyruvyl shikimate-3-phosphate and inorganic phosphate. This Dehalococcoides mccartyi (strain ATCC BAA-2266 / KCTC 15142 / 195) (Dehalococcoides ethenogenes (strain 195)) protein is 3-phosphoshikimate 1-carboxyvinyltransferase.